Reading from the N-terminus, the 361-residue chain is Chorismate synthase (361 aa).

Residues R48 and R54 each coordinate NADP(+). Residues 131 to 133 (RSS), 243 to 244 (NA), G287, 302 to 306 (KPTSS), and R328 each bind FMN.

The protein belongs to the chorismate synthase family. As to quaternary structure, homotetramer. Requires FMNH2 as cofactor.

It catalyses the reaction 5-O-(1-carboxyvinyl)-3-phosphoshikimate = chorismate + phosphate. It participates in metabolic intermediate biosynthesis; chorismate biosynthesis; chorismate from D-erythrose 4-phosphate and phosphoenolpyruvate: step 7/7. Catalyzes the anti-1,4-elimination of the C-3 phosphate and the C-6 proR hydrogen from 5-enolpyruvylshikimate-3-phosphate (EPSP) to yield chorismate, which is the branch point compound that serves as the starting substrate for the three terminal pathways of aromatic amino acid biosynthesis. This reaction introduces a second double bond into the aromatic ring system. The protein is Chorismate synthase of Rhodopseudomonas palustris (strain BisB5).